The chain runs to 699 residues: Elongation factor G (699 aa).

Positions 8 to 283 (EHIRNIGICA…AVVDFLPSPI (276 aa)) constitute a tr-type G domain. Residues 17-24 (AHIDAGKT), 81-85 (DTPGH), and 135-138 (NKMD) contribute to the GTP site.

The protein belongs to the TRAFAC class translation factor GTPase superfamily. Classic translation factor GTPase family. EF-G/EF-2 subfamily.

The protein resides in the cytoplasm. Its function is as follows. Catalyzes the GTP-dependent ribosomal translocation step during translation elongation. During this step, the ribosome changes from the pre-translocational (PRE) to the post-translocational (POST) state as the newly formed A-site-bound peptidyl-tRNA and P-site-bound deacylated tRNA move to the P and E sites, respectively. Catalyzes the coordinated movement of the two tRNA molecules, the mRNA and conformational changes in the ribosome. The protein is Elongation factor G of Rickettsia africae (strain ESF-5).